A 370-amino-acid chain; its full sequence is Putative methylthioribose-1-phosphate isomerase (370 aa).

Substrate contacts are provided by residues 66–68 (RGA), Arg-109, and Gln-217. The active-site Proton donor is Asp-258. Residue 268–269 (NK) participates in substrate binding.

This sequence belongs to the eIF-2B alpha/beta/delta subunits family. MtnA subfamily.

The enzyme catalyses 5-(methylsulfanyl)-alpha-D-ribose 1-phosphate = 5-(methylsulfanyl)-D-ribulose 1-phosphate. Catalyzes the interconversion of methylthioribose-1-phosphate (MTR-1-P) into methylthioribulose-1-phosphate (MTRu-1-P). This Aeropyrum pernix (strain ATCC 700893 / DSM 11879 / JCM 9820 / NBRC 100138 / K1) protein is Putative methylthioribose-1-phosphate isomerase.